Consider the following 295-residue polypeptide: Alpha-ketoglutarate-dependent dioxygenase alkB homolog 3 (295 aa).

The tract at residues methionine 1–glutamine 48 is disordered. Residues serine 22 to serine 35 are compositionally biased toward low complexity. Substrate-binding positions include tryptophan 115 and tyrosine 141–tyrosine 143. A Fe2OG dioxygenase domain is found at threonine 172–tyrosine 278. Leucine 177 is subject to (4R)-5-hydroxyleucine; alternate. Residue leucine 177 is modified to (4R)-5-oxoleucine; alternate. Position 179–181 (asparagine 179–tyrosine 181) interacts with 2-oxoglutarate. Residues histidine 191 and aspartate 193 each contribute to the Fe cation site. Aspartate 194 contacts substrate. Fe cation is bound at residue histidine 257. Residues arginine 269–arginine 275 and arginine 275 contribute to the 2-oxoglutarate site.

It belongs to the alkB family. Interacts with the ASCC complex composed of ASCC1, ASCC2 and ASCC3. Interacts directly with ASCC3, and is thereby recruited to the ASCC complex. Interacts with OTUD4; the interaction is direct. Interacts with USP7 and USP9X. Requires Fe(2+) as cofactor. Ubiquitinated; undergoes 'Lys-48'-linked polyubiquitination. OTUD4 promotes USP7 and USP9X-dependent deubiquitination of 'Lys-48'-polyubiquitinated ALKBH3 promoting the repair of alkylated DNA lesions.

It localises to the nucleus. The protein resides in the cytoplasm. The catalysed reaction is an N(1)-methyladenosine in mRNA + 2-oxoglutarate + O2 = an adenosine in mRNA + formaldehyde + succinate + CO2. It catalyses the reaction a methylated nucleobase within DNA + 2-oxoglutarate + O2 = a nucleobase within DNA + formaldehyde + succinate + CO2. It carries out the reaction an N(1)-methyl-2'-deoxyadenosine in single-stranded DNA + 2-oxoglutarate + O2 = a 2'-deoxyadenosine in single-stranded DNA + formaldehyde + succinate + CO2 + H(+). The enzyme catalyses an N(3)-methyl-2'-deoxycytidine in single-stranded DNA + 2-oxoglutarate + O2 = a 2'-deoxycytidine in single-stranded DNA + formaldehyde + succinate + CO2 + H(+). The catalysed reaction is a 3,N(4)-etheno-2'-deoxycytidine in single-stranded DNA + 2-oxoglutarate + O2 + H2O = a 2'-deoxycytidine in single-stranded DNA + glyoxal + succinate + CO2. Activated by ascorbate. Dioxygenase that mediates demethylation of DNA and RNA containing 1-methyladenosine (m1A). Repairs alkylated DNA containing 1-methyladenosine (m1A) and 3-methylcytosine (m3C) by oxidative demethylation. Has a strong preference for single-stranded DNA. Able to process alkylated m3C within double-stranded regions via its interaction with ASCC3, which promotes DNA unwinding to generate single-stranded substrate needed for ALKBH3. Can repair exocyclic 3,N4-ethenocytosine adducs in single-stranded DNA. Also acts on RNA. Demethylates N(1)-methyladenosine (m1A) RNA, an epigenetic internal modification of messenger RNAs (mRNAs) highly enriched within 5'-untranslated regions (UTRs) and in the vicinity of start codons. Requires molecular oxygen, alpha-ketoglutarate and iron. This Rattus norvegicus (Rat) protein is Alpha-ketoglutarate-dependent dioxygenase alkB homolog 3.